The primary structure comprises 602 residues: Cytoskeleton-associated protein 4 (602 aa).

Residues 1–83 (MPSAKQRGSK…GGGGKSSSSS (83 aa)) form a disordered region. The Cytoplasmic portion of the chain corresponds to 1–106 (MPSAKQRGSK…SASCSRRLGR (106 aa)). Serine 3, serine 17, and serine 19 each carry phosphoserine. Lysine 21 bears the N6-acetyllysine mark. Positions 35–52 (KPPPAPQQPPPPPAPHPQ) are enriched in pro residues. Positions 53–64 (QHPQQHPQNQAH) are enriched in low complexity. A lipid anchor (S-palmitoyl cysteine; by ZDHHC2) is attached at cysteine 100. Residues 107–127 (ALNFLFYLALVAAAAFSGWCV) form a helical membrane-spanning segment. The Extracellular portion of the chain corresponds to 128 to 602 (HHVLEEVQQV…VKVEKIHEKV (475 aa)). Residues 130–214 (VLEEVQQVRR…QKLQNEILKD (85 aa)) adopt a coiled-coil conformation. At serine 232 the chain carries Phosphoserine; by FAM20C. 2 coiled-coil regions span residues 256-460 (TEVQ…GLGS) and 533-602 (LSSL…HEKV). Serine 312 bears the Phosphoserine mark.

In terms of assembly, interacts with REEP5. Reversibly palmitoylated. Palmitoylation at Cys-100 by ZDHHC2 is required for its trafficking from the ER to the plasma membrane and for its perinuclear localization. Palmitoylation by ZDHHC2 is also required for its function in APF-mediated antiproliferative signaling. Post-translationally, increased phosphorylation during mitosis prevents binding to microtubules.

It is found in the endoplasmic reticulum membrane. It localises to the cell membrane. Its subcellular location is the cytoplasm. The protein resides in the cytoskeleton. The protein localises to the perinuclear region. Mediates the anchoring of the endoplasmic reticulum to microtubules. In terms of biological role, high-affinity epithelial cell surface receptor for the FZD8-related low molecular weight sialoglycopeptide APF/antiproliferative factor. Mediates the APF antiproliferative signaling within cells. This is Cytoskeleton-associated protein 4 (CKAP4) from Homo sapiens (Human).